The chain runs to 218 residues: Envelope glycoprotein L (218 aa).

The interval 57-185 is interaction with gH; the sequence is KLVKATRLDF…LGPPPLGCFT (129 aa). A gL alphaherpesvirus-type domain is found at 60 to 218; that stretch reads KATRLDFTWG…ASYYANLQKT (159 aa). 2 cysteine pairs are disulfide-bonded: Cys81/Cys113 and Cys183/Cys206.

It belongs to the herpesviridae glycoprotein L (gL) family. Alphaherpesvirinae gL subfamily. As to quaternary structure, interacts with glycoprotein H (gH); this interaction is necessary for the correct processing and cell surface expression of gH. The heterodimer gH/gL seems to interact with gB trimers during fusion.

The protein resides in the virion membrane. The protein localises to the host cell membrane. Its subcellular location is the host Golgi apparatus. It is found in the host trans-Golgi network. Its function is as follows. The heterodimer glycoprotein H-glycoprotein L is required for the fusion of viral and plasma membranes leading to virus entry into the host cell. Acts as a functional inhibitor of gH and maintains gH in an inhibited form. Upon binding to host integrins, gL dissociates from gH leading to activation of the viral fusion glycoproteins gB and gH. The polypeptide is Envelope glycoprotein L (Equus caballus (Horse)).